A 283-amino-acid polypeptide reads, in one-letter code: Pantothenate synthetase (283 aa).

Residue 30-37 (MGNLHDGH) coordinates ATP. Histidine 37 acts as the Proton donor in catalysis. Glutamine 61 is a (R)-pantoate binding site. Position 61 (glutamine 61) interacts with beta-alanine. ATP is bound at residue 149 to 152 (GEKD). A (R)-pantoate-binding site is contributed by glutamine 155. An ATP-binding site is contributed by 186–189 (LSSR).

This sequence belongs to the pantothenate synthetase family. Homodimer.

It localises to the cytoplasm. The enzyme catalyses (R)-pantoate + beta-alanine + ATP = (R)-pantothenate + AMP + diphosphate + H(+). The protein operates within cofactor biosynthesis; (R)-pantothenate biosynthesis; (R)-pantothenate from (R)-pantoate and beta-alanine: step 1/1. Catalyzes the condensation of pantoate with beta-alanine in an ATP-dependent reaction via a pantoyl-adenylate intermediate. In Escherichia coli O6:K15:H31 (strain 536 / UPEC), this protein is Pantothenate synthetase.